A 480-amino-acid polypeptide reads, in one-letter code: Glycogen synthase (480 aa).

K15 provides a ligand contact to ADP-alpha-D-glucose.

This sequence belongs to the glycosyltransferase 1 family. Bacterial/plant glycogen synthase subfamily.

It carries out the reaction [(1-&gt;4)-alpha-D-glucosyl](n) + ADP-alpha-D-glucose = [(1-&gt;4)-alpha-D-glucosyl](n+1) + ADP + H(+). It functions in the pathway glycan biosynthesis; glycogen biosynthesis. Functionally, synthesizes alpha-1,4-glucan chains using ADP-glucose. This chain is Glycogen synthase, found in Granulibacter bethesdensis (strain ATCC BAA-1260 / CGDNIH1).